Consider the following 293-residue polypeptide: Protease HtpX (293 aa).

The next 2 membrane-spanning stretches (helical) occupy residues 4 to 24 (IALFLLTNLAVMLVFGLVLSL) and 34 to 54 (GLMIMAGLFGFGGAFVSLLMS). Position 139 (His-139) interacts with Zn(2+). Glu-140 is a catalytic residue. Zn(2+) is bound at residue His-143. 2 helical membrane-spanning segments follow: residues 158–178 (IVNTFVIFISRLIAQVAAGFL) and 193–213 (MVYFAVSMVLELVFGILASII). Glu-222 serves as a coordination point for Zn(2+).

It belongs to the peptidase M48B family. Requires Zn(2+) as cofactor.

It is found in the cell inner membrane. This chain is Protease HtpX, found in Yersinia enterocolitica serotype O:8 / biotype 1B (strain NCTC 13174 / 8081).